Reading from the N-terminus, the 441-residue chain is Serine carboxypeptidase-like 1 (441 aa).

An N-terminal signal peptide occupies residues 1 to 29; it reads MANKYVSSVLKSLLVLLHLVFLSKQHVDS. Intrachain disulfides connect Cys88/Cys331, Cys252/Cys266, and Cys290/Cys297. Asn109 carries an N-linked (GlcNAc...) asparagine glycan. Residue Ser184 is part of the active site. An N-linked (GlcNAc...) asparagine glycan is attached at Asn350. Asp366 is an active-site residue. N-linked (GlcNAc...) asparagine glycosylation occurs at Asn382. His419 is an active-site residue.

Belongs to the peptidase S10 family. In terms of tissue distribution, expressed in seedlings and roots.

The protein localises to the secreted. Its function is as follows. Probable carboxypeptidase. The polypeptide is Serine carboxypeptidase-like 1 (SCPL1) (Arabidopsis thaliana (Mouse-ear cress)).